Here is a 223-residue protein sequence, read N- to C-terminus: Sigma non-opioid intracellular receptor 1 (223 aa).

Residues Met1–Trp9 lie on the Lumenal side of the membrane. Positions Gln2–Arg8 are targeting to endoplasmic reticulum-associated lipid droplets. A helical membrane pass occupies residues Ala10–Leu30. Topologically, residues Gly31 to Pro223 are cytoplasmic. The tract at residues Ser99–Leu106 is important for ligand-binding. The interval Val177–Pro223 is C-terminal hydrophobic region.

The protein belongs to the ERG2 family. Homotrimer. Forms a ternary complex with ANK2 and ITPR3. The complex is disrupted by agonists. Interacts with KCNA4. Interacts with KCNA2; cocaine consumption leads to increased interaction. Interacts with RNF112 in an oxidative stress-regulated manner. As to expression, widely expressed with higher expression in liver, colon, prostate, placenta, small intestine, heart and pancreas. Expressed in the retina by retinal pigment epithelial cells. Expressed in alpha-motor neurons.

The protein resides in the nucleus inner membrane. Its subcellular location is the nucleus outer membrane. It localises to the nucleus envelope. The protein localises to the cytoplasmic vesicle. It is found in the endoplasmic reticulum membrane. The protein resides in the membrane. Its subcellular location is the lipid droplet. It localises to the cell junction. The protein localises to the cell membrane. It is found in the cell projection. The protein resides in the growth cone. Its subcellular location is the postsynaptic density membrane. Functionally, functions in lipid transport from the endoplasmic reticulum and is involved in a wide array of cellular functions probably through regulation of the biogenesis of lipid microdomains at the plasma membrane. Involved in the regulation of different receptors it plays a role in BDNF signaling and EGF signaling. Also regulates ion channels like the potassium channel and could modulate neurotransmitter release. Plays a role in calcium signaling through modulation together with ANK2 of the ITP3R-dependent calcium efflux at the endoplasmic reticulum. Plays a role in several other cell functions including proliferation, survival and death. Originally identified for its ability to bind various psychoactive drugs it is involved in learning processes, memory and mood alteration. Necessary for proper mitochondrial axonal transport in motor neurons, in particular the retrograde movement of mitochondria. Plays a role in protecting cells against oxidative stress-induced cell death via its interaction with RNF112. This chain is Sigma non-opioid intracellular receptor 1 (SIGMAR1), found in Homo sapiens (Human).